The chain runs to 96 residues: uncharacterized protein (96 aa).

The next 2 membrane-spanning stretches (helical) occupy residues 27-47 (LYTV…FFFF) and 52-72 (MSAG…RPTI).

It localises to the cell membrane. This is an uncharacterized protein from Bacillus subtilis (strain 168).